We begin with the raw amino-acid sequence, 379 residues long: Probable G-protein coupled receptor 27 (379 aa).

The Extracellular segment spans residues methionine 1–alanine 26. N-linked (GlcNAc...) asparagine glycosylation occurs at asparagine 3. Residues threonine 27–valine 47 traverse the membrane as a helical segment. Residues arginine 48 to tyrosine 58 lie on the Cytoplasmic side of the membrane. Residues leucine 59–methionine 79 form a helical membrane-spanning segment. Over leucine 80–leucine 100 the chain is Extracellular. The cysteines at positions 98 and 175 are disulfide-linked. A helical membrane pass occupies residues leucine 101 to valine 121. The Cytoplasmic portion of the chain corresponds to threonine 122–cysteine 142. The helical transmembrane segment at alanine 143–leucine 163 threads the bilayer. Residues aspartate 164–proline 185 are Extracellular-facing. Residues glycine 186 to leucine 206 traverse the membrane as a helical segment. Residues arginine 207–methionine 289 lie on the Cytoplasmic side of the membrane. The helical transmembrane segment at phenylalanine 290–leucine 310 threads the bilayer. Residues arginine 311–leucine 324 lie on the Extracellular side of the membrane. A helical membrane pass occupies residues threonine 325 to phenylalanine 345. The Cytoplasmic portion of the chain corresponds to asparagine 346–leucine 379.

Belongs to the G-protein coupled receptor 1 family.

The protein resides in the cell membrane. Orphan receptor. Possible candidate for amine-like G-protein coupled receptor. The chain is Probable G-protein coupled receptor 27 (Gpr27) from Mus musculus (Mouse).